The primary structure comprises 99 residues: NADH-quinone oxidoreductase subunit K (99 aa).

Transmembrane regions (helical) follow at residues Pro3–Leu23, Ile28–Phe48, and Met59–Ile79.

Belongs to the complex I subunit 4L family. In terms of assembly, NDH-1 is composed of 14 different subunits. Subunits NuoA, H, J, K, L, M, N constitute the membrane sector of the complex.

It is found in the cell membrane. The catalysed reaction is a quinone + NADH + 5 H(+)(in) = a quinol + NAD(+) + 4 H(+)(out). Functionally, NDH-1 shuttles electrons from NADH, via FMN and iron-sulfur (Fe-S) centers, to quinones in the respiratory chain. The immediate electron acceptor for the enzyme in this species is believed to be a menaquinone. Couples the redox reaction to proton translocation (for every two electrons transferred, four hydrogen ions are translocated across the cytoplasmic membrane), and thus conserves the redox energy in a proton gradient. This chain is NADH-quinone oxidoreductase subunit K, found in Mycobacterium avium (strain 104).